The primary structure comprises 208 residues: Hypoxanthine-guanine phosphoribosyltransferase (208 aa).

GMP contacts are provided by residues lysine 63, 122–130 (EDIVDSAIT), lysine 154, and aspartate 182. Residue aspartate 126 is the Proton acceptor of the active site. Mg(2+) is bound at residue aspartate 182.

This sequence belongs to the purine/pyrimidine phosphoribosyltransferase family. Mg(2+) serves as cofactor.

It localises to the cytoplasm. The catalysed reaction is IMP + diphosphate = hypoxanthine + 5-phospho-alpha-D-ribose 1-diphosphate. It carries out the reaction GMP + diphosphate = guanine + 5-phospho-alpha-D-ribose 1-diphosphate. It functions in the pathway purine metabolism; IMP biosynthesis via salvage pathway; IMP from hypoxanthine: step 1/1. Its function is as follows. Converts guanine to guanosine monophosphate, and hypoxanthine to inosine monophosphate. Transfers the 5-phosphoribosyl group from 5-phosphoribosylpyrophosphate onto the purine. Plays a central role in the generation of purine nucleotides through the purine salvage pathway. This Crithidia fasciculata protein is Hypoxanthine-guanine phosphoribosyltransferase (HGPRT).